A 357-amino-acid chain; its full sequence is CD4+ T-cell-stimulating antigen (357 aa).

The N-terminal stretch at 1-22 (MKKRTFALALSMIIASGVILGA) is a signal peptide. A lipid anchor (N-palmitoyl cysteine) is attached at Cys-23. A lipid anchor (S-diacylglycerol cysteine) is attached at Cys-23.

The protein belongs to the BMP lipoprotein family.

Its subcellular location is the cell membrane. The sequence is that of CD4+ T-cell-stimulating antigen (tcsA) from Listeria monocytogenes serovar 1/2a (strain ATCC BAA-679 / EGD-e).